We begin with the raw amino-acid sequence, 293 residues long: N-acetylneuraminate lyase (293 aa).

The aceneuramate site is built by Ser-47, Thr-48, and Tyr-136. The active-site Proton donor is the Tyr-136. The Schiff-base intermediate with substrate role is filled by Lys-164. Aceneuramate is bound by residues Thr-166, Gly-188, Asp-190, Glu-191, Ser-207, and Tyr-251.

The protein belongs to the DapA family. NanA subfamily. As to quaternary structure, homotetramer.

The protein resides in the cytoplasm. It catalyses the reaction aceneuramate = aldehydo-N-acetyl-D-mannosamine + pyruvate. It participates in amino-sugar metabolism; N-acetylneuraminate degradation; D-fructose 6-phosphate from N-acetylneuraminate: step 1/5. Catalyzes the reversible aldol cleavage of N-acetylneuraminic acid (sialic acid; Neu5Ac) to form pyruvate and N-acetylmannosamine (ManNAc) via a Schiff base intermediate. The chain is N-acetylneuraminate lyase from Pasteurella multocida (strain Pm70).